We begin with the raw amino-acid sequence, 255 residues long: 5-oxoprolinase subunit A (255 aa).

This sequence belongs to the LamB/PxpA family. In terms of assembly, forms a complex composed of PxpA, PxpB and PxpC.

It catalyses the reaction 5-oxo-L-proline + ATP + 2 H2O = L-glutamate + ADP + phosphate + H(+). Catalyzes the cleavage of 5-oxoproline to form L-glutamate coupled to the hydrolysis of ATP to ADP and inorganic phosphate. The protein is 5-oxoprolinase subunit A of Thermococcus sibiricus (strain DSM 12597 / MM 739).